Consider the following 703-residue polypeptide: Polyribonucleotide nucleotidyltransferase (703 aa).

Asp-486 and Asp-492 together coordinate Mg(2+). The region spanning 553–614 (PRITTIWIKP…AACDAAIQMI (62 aa)) is the KH domain. Residues 624–692 (GKLYMGTVKK…KQGKIKLSRK (69 aa)) form the S1 motif domain.

Belongs to the polyribonucleotide nucleotidyltransferase family. Requires Mg(2+) as cofactor.

It localises to the cytoplasm. The catalysed reaction is RNA(n+1) + phosphate = RNA(n) + a ribonucleoside 5'-diphosphate. Involved in mRNA degradation. Catalyzes the phosphorolysis of single-stranded polyribonucleotides processively in the 3'- to 5'-direction. The sequence is that of Polyribonucleotide nucleotidyltransferase from Trichlorobacter lovleyi (strain ATCC BAA-1151 / DSM 17278 / SZ) (Geobacter lovleyi).